Here is a 243-residue protein sequence, read N- to C-terminus: Uridylate kinase (243 aa).

15 to 18 is an ATP binding site; the sequence is KISG. Glycine 57 contacts UMP. ATP contacts are provided by glycine 58 and arginine 62. UMP-binding positions include aspartate 77 and 138–145; that span reads TGNPFFTT. Positions 165, 171, and 174 each coordinate ATP.

The protein belongs to the UMP kinase family. As to quaternary structure, homohexamer.

It localises to the cytoplasm. The enzyme catalyses UMP + ATP = UDP + ADP. It functions in the pathway pyrimidine metabolism; CTP biosynthesis via de novo pathway; UDP from UMP (UMPK route): step 1/1. With respect to regulation, inhibited by UTP. Catalyzes the reversible phosphorylation of UMP to UDP. This chain is Uridylate kinase, found in Blochmanniella floridana.